The chain runs to 316 residues: 4-hydroxy-3-methylbut-2-enyl diphosphate reductase (316 aa).

Cys-12 provides a ligand contact to [4Fe-4S] cluster. (2E)-4-hydroxy-3-methylbut-2-enyl diphosphate-binding residues include His-43 and His-81. Positions 43 and 81 each coordinate dimethylallyl diphosphate. Isopentenyl diphosphate-binding residues include His-43 and His-81. Cys-103 is a binding site for [4Fe-4S] cluster. His-131 lines the (2E)-4-hydroxy-3-methylbut-2-enyl diphosphate pocket. His-131 contacts dimethylallyl diphosphate. An isopentenyl diphosphate-binding site is contributed by His-131. Glu-133 serves as the catalytic Proton donor. Thr-170 is a (2E)-4-hydroxy-3-methylbut-2-enyl diphosphate binding site. Cys-198 contacts [4Fe-4S] cluster. (2E)-4-hydroxy-3-methylbut-2-enyl diphosphate contacts are provided by Ser-226, Asn-228, and Ser-271. Positions 226, 228, and 271 each coordinate dimethylallyl diphosphate. Positions 226, 228, and 271 each coordinate isopentenyl diphosphate.

The protein belongs to the IspH family. [4Fe-4S] cluster is required as a cofactor.

The enzyme catalyses isopentenyl diphosphate + 2 oxidized [2Fe-2S]-[ferredoxin] + H2O = (2E)-4-hydroxy-3-methylbut-2-enyl diphosphate + 2 reduced [2Fe-2S]-[ferredoxin] + 2 H(+). It catalyses the reaction dimethylallyl diphosphate + 2 oxidized [2Fe-2S]-[ferredoxin] + H2O = (2E)-4-hydroxy-3-methylbut-2-enyl diphosphate + 2 reduced [2Fe-2S]-[ferredoxin] + 2 H(+). It participates in isoprenoid biosynthesis; dimethylallyl diphosphate biosynthesis; dimethylallyl diphosphate from (2E)-4-hydroxy-3-methylbutenyl diphosphate: step 1/1. The protein operates within isoprenoid biosynthesis; isopentenyl diphosphate biosynthesis via DXP pathway; isopentenyl diphosphate from 1-deoxy-D-xylulose 5-phosphate: step 6/6. Its function is as follows. Catalyzes the conversion of 1-hydroxy-2-methyl-2-(E)-butenyl 4-diphosphate (HMBPP) into a mixture of isopentenyl diphosphate (IPP) and dimethylallyl diphosphate (DMAPP). Acts in the terminal step of the DOXP/MEP pathway for isoprenoid precursor biosynthesis. The sequence is that of 4-hydroxy-3-methylbut-2-enyl diphosphate reductase from Bacillus anthracis (strain A0248).